Consider the following 266-residue polypeptide: MVIYLDVLIFENSIVNTFLLYITAQTLRIKVKMRYLILAGIFGGLYVIVLVIPTLKIFSSLIFKIIAAFLMIIICFRKKSLRFNIKALAVLIMYSMVTAGLCFFIELNNTRGSYFNAFIGNVSYKWILIAIMIIYMFVNRIIWFINDRKLTQSLIYEIEICFKDNSKFINAFLDTGNELREPITNLPVIVVEKDMVSGIKWDDCPKFYVPFRLFNGKAGNLEAFKPSYVKIYIGDKVEVRNAIIALIDNKLSSLNDYNALLSRGSI.

4 helical membrane-spanning segments follow: residues 36 to 52 (LILA…VLVI), 60 to 76 (SLIF…IICF), 89 to 105 (AVLI…CFFI), and 126 to 142 (WILI…NRII). Asp174 is a catalytic residue.

This sequence belongs to the peptidase U4 family.

The protein localises to the cell membrane. In terms of biological role, probable aspartic protease that is responsible for the proteolytic cleavage of the RNA polymerase sigma E factor (SigE/spoIIGB) to yield the active peptide in the mother cell during sporulation. Responds to a signal from the forespore that is triggered by the extracellular signal protein SpoIIR. The protein is Probable sporulation sigma-E factor-processing peptidase (spoIIGA) of Clostridium acetobutylicum (strain ATCC 824 / DSM 792 / JCM 1419 / IAM 19013 / LMG 5710 / NBRC 13948 / NRRL B-527 / VKM B-1787 / 2291 / W).